The sequence spans 457 residues: Multidrug resistance protein MdtK (457 aa).

The Cytoplasmic portion of the chain corresponds to 1-15; the sequence is MQKYTSEARQLLALR. A helical transmembrane segment spans residues 16 to 36; sequence IPVILAQVAQTAMGFVDTVMA. The Extracellular portion of the chain corresponds to 37–52; the sequence is GGYSATDMAAVAIGTS. Residues 53–73 traverse the membrane as a helical segment; it reads IWLPAILFGHGLLLALTPVIA. Residues 74–92 lie on the Cytoplasmic side of the membrane; the sequence is QLNGSGRRERIAHQVRQGF. The helical transmembrane segment at 93–113 threads the bilayer; that stretch reads WLAGFVSVLVMIVLWNAGYII. Residues 114-126 lie on the Extracellular side of the membrane; it reads RSMHNIDPALADK. The helical transmembrane segment at 127–147 threads the bilayer; that stretch reads AVGYLRALLWGAPGYLFFQVA. Over 148–159 the chain is Cytoplasmic; sequence RNQCEGLAKTKP. Residues 160–180 form a helical membrane-spanning segment; that stretch reads GMVMGFLGLLVNIPVNYIFIY. Topologically, residues 181–187 are extracellular; the sequence is GHFGMPE. The helical transmembrane segment at 188–208 threads the bilayer; the sequence is LGGIGCGVATAAVYWVMFIAM. Residues 209 to 242 lie on the Cytoplasmic side of the membrane; sequence LSYIKHARSMRDIRNEKGFGKPDSVVMKRLIQLG. The chain crosses the membrane as a helical span at residues 243–263; the sequence is LPIALALFFEVTLFAVVALLV. Over 264–275 the chain is Extracellular; the sequence is SPLGIVDVAGHQ. A helical transmembrane segment spans residues 276 to 296; that stretch reads IALNFSSLMFVLPMSLAAAVT. Topologically, residues 297–313 are cytoplasmic; sequence IRVGYRLGQGSTLDAQT. The helical transmembrane segment at 314-334 threads the bilayer; that stretch reads AARTGLGVGICMAVVTAIFTV. The Extracellular portion of the chain corresponds to 335–349; it reads TLRKHIALLYNDNPE. Residues 350-370 traverse the membrane as a helical segment; that stretch reads VVALAAQLMLLAAVYQISDSI. At 371–386 the chain is on the cytoplasmic side; sequence QVIGSGILRGYKDTRS. The helical transmembrane segment at 387-407 threads the bilayer; the sequence is IFFITFTAYWVLGLPSGYILA. At 408–417 the chain is on the extracellular side; the sequence is LTDLVVDRMG. Residues 418–438 form a helical membrane-spanning segment; that stretch reads PAGFWMGFIIGLTSAAVLMML. Topologically, residues 439–457 are cytoplasmic; it reads RMRYLQRQPSAIILQRAAR.

Belongs to the multi antimicrobial extrusion (MATE) (TC 2.A.66.1) family. MdtK subfamily.

The protein localises to the cell inner membrane. Functionally, multidrug efflux pump that functions probably as a Na(+)/drug antiporter. This Salmonella typhimurium (strain LT2 / SGSC1412 / ATCC 700720) protein is Multidrug resistance protein MdtK (mdtK).